The primary structure comprises 522 residues: Glutathione reductase, mitochondrial (522 aa).

The transit peptide at 1–43 (MALLPRALSSGGRPSWRRAARASRGFPLPLPFPAAATHALSRA) directs the protein to the mitochondrion. The FAD site is built by S74 and G75. S74 contributes to the glutathione binding site. Glutathione is bound at residue R81. E94 provides a ligand contact to FAD. The residue at position 97 (K97) is an N6-acetyllysine. FAD-binding residues include T101, C102, and K110. Cysteines 102 and 107 form a disulfide. Y158 serves as a coordination point for glutathione. FAD is bound at residue A174. NADP(+) contacts are provided by A239, I242, E245, R262, R268, and G334. D375 is an FAD binding site. L381 serves as a coordination point for NADP(+). T383 serves as a coordination point for FAD. Position 391 (R391) interacts with glutathione. V414 provides a ligand contact to NADP(+). H511 provides a ligand contact to FAD. H511 acts as the Proton acceptor in catalysis.

This sequence belongs to the class-I pyridine nucleotide-disulfide oxidoreductase family. In terms of assembly, homodimer; disulfide-linked. It depends on FAD as a cofactor.

The protein localises to the mitochondrion. Its subcellular location is the cytoplasm. The enzyme catalyses 2 glutathione + NADP(+) = glutathione disulfide + NADPH + H(+). Its function is as follows. Catalyzes the reduction of glutathione disulfide (GSSG) to reduced glutathione (GSH). Constitutes the major mechanism to maintain a high GSH:GSSG ratio in the cytosol. This Callithrix jacchus (White-tufted-ear marmoset) protein is Glutathione reductase, mitochondrial (GSR).